The sequence spans 197 residues: Inosine triphosphate pyrophosphatase (197 aa).

An ITP-binding site is contributed by 10-15; that stretch reads TGNANK. E45 lines the Mg(2+) pocket. Residues K58, 76 to 77, K93, 151 to 154, K175, and 180 to 181 each bind ITP; these read DT, FGWD, and HR.

The protein belongs to the HAM1 NTPase family. In terms of assembly, homodimer. It depends on Mg(2+) as a cofactor. Mn(2+) is required as a cofactor.

The protein resides in the cytoplasm. Its subcellular location is the nucleus. The catalysed reaction is ITP + H2O = IMP + diphosphate + H(+). It catalyses the reaction dITP + H2O = dIMP + diphosphate + H(+). It carries out the reaction XTP + H2O = XMP + diphosphate + H(+). The enzyme catalyses N(6)-hydroxy-dATP + H2O = N(6)-hydroxy-dAMP + diphosphate + H(+). Its function is as follows. Pyrophosphatase that hydrolyzes the non-canonical purine nucleotides inosine triphosphate (ITP), deoxyinosine triphosphate (dITP) as well as 2'-deoxy-N-6-hydroxylaminopurine triphosphate (dHAPTP) and 5-bromodeoxyuridine 5'-triphosphate (BrdUTP) to their respective monophosphate derivatives. Xanthosine 5'-triphosphate (XTP) is also a potential substrate. The enzyme does not distinguish between the deoxy- and ribose forms. Probably excludes non-canonical purines from RNA and DNA precursor pools, thus preventing their incorporation into RNA and DNA and avoiding chromosomal lesions. This chain is Inosine triphosphate pyrophosphatase, found in Saccharomyces cerevisiae (strain ATCC 204508 / S288c) (Baker's yeast).